The primary structure comprises 408 residues: Peptidase T-like protein RB0614 (408 aa).

His-80 contributes to the Zn(2+) binding site. Residue Asp-82 is part of the active site. Asp-142 contacts Zn(2+). Glu-174 functions as the Proton acceptor in the catalytic mechanism. Zn(2+)-binding residues include Glu-175, Asp-198, and His-380.

Belongs to the peptidase M20B family. It depends on Zn(2+) as a cofactor.

In Rhizobium meliloti (strain 1021) (Ensifer meliloti), this protein is Peptidase T-like protein RB0614.